The primary structure comprises 449 residues: MSTSSAAVNGNHYEQLHQGRTKMYKSKVDVVLGAQWGDEGKGKVVDMLASEVDIVCRCQGGNNAGHTVVANGTEFDFHLLPSGVVNEKCISVIGNGVVIHLPSLFDELLKNQAKGLSHLENRLIISDRAHLVFDFHQHVDGMQEAEKGGKSLGTTKKGIGPAYSSKATRNGIRVGELLGDFNLFSDKFKSIVATHVRLFPSINVDVDAELARYKDYAEKVRPYVKDTICFLHTALRNGKTILVEGANAAMLDIDFGTYPYVTSSNCSIGGVLTGLGLPPQTIGEVIGVVKAYTTRVGDGPFPTEQLNEVGDLLQTRGFEVGVTTKRKRRCGWLDIPLLKYTSLVNGYTCICITKLDILDTMAEIKVAVGYKRSNGEKLDHFPGTIAELGSIEVEYANLPGWQTSTEHIRNFKELPENAQNYVRFLESELSVPVRWVGVGKGRESIINVH.

Residues 37–43 and 65–67 contribute to the GTP site; these read GDEGKGK and GHT. Asp38 functions as the Proton acceptor in the catalytic mechanism. Residues Asp38 and Gly65 each contribute to the Mg(2+) site. IMP-binding positions include 38–41, 63–66, Thr155, Arg169, Asn247, Thr262, and Arg326; these read DEGK and NAGH. Residue His66 is the Proton donor of the active site. Residue 322 to 328 participates in substrate binding; sequence VTTKRKR. Residues Arg328, 354–356, and 437–439 each bind GTP; these read KLD and GVG.

It belongs to the adenylosuccinate synthetase family. As to quaternary structure, homodimer. Requires Mg(2+) as cofactor.

The protein resides in the cytoplasm. It catalyses the reaction IMP + L-aspartate + GTP = N(6)-(1,2-dicarboxyethyl)-AMP + GDP + phosphate + 2 H(+). It participates in purine metabolism; AMP biosynthesis via de novo pathway; AMP from IMP: step 1/2. Plays an important role in the de novo pathway and in the salvage pathway of purine nucleotide biosynthesis. Catalyzes the first committed step in the biosynthesis of AMP from IMP. This chain is Adenylosuccinate synthetase, found in Drosophila willistoni (Fruit fly).